The chain runs to 327 residues: Fumigatonoid B endoperoxide isomerase nvfE (327 aa).

The segment at 1 to 22 is disordered; sequence MGRDQVSHKRSQNSNVSEIPDL. Residues H152, D154, and H234 each coordinate Fe cation.

The protein belongs to the PhyH family. Homodimer. It depends on Fe cation as a cofactor.

It carries out the reaction fumigatonoid B = fumigatonoid C. It participates in secondary metabolite biosynthesis; terpenoid biosynthesis. Its function is as follows. Fumigatonoid B endoperoxide isomerase; part of the gene cluster that mediates the biosynthesis of novofumigatonin, a heavily oxygenated meroterpenoid containing a unique orthoester moiety. The first step of the pathway is the synthesis of 3,5-dimethylorsellinic acid (DMOA) by the polyketide synthase nvfA via condensation of one acetyl-CoA starter unit with 3 malonyl-CoA units and 2 methylations. DMOA is then converted to farnesyl-DMOA by the farnesyltransferase nvfB. Epoxydation by FAD-dependent monooxygenase nvfK, followed by a protonation-initiated cyclization catalyzed by the terpene cyclase nvfL leads to the production of asnavolin H. The short chain dehydrogenase nvfC then as a 3-OH dehydrogenase of asnovolin H to yield chemesin D. There are two branches to synthesize asnovolin A from chemesin D. In one branch, chemesin D undergoes Baeyer-Villiger oxidation by nvfH, methylation by nvfJ, and enoyl reduction by the nvfM D enoylreductase that reduces the double bond between C-5'and C-6', to form respectively asnovolin I, asnovolin K, and asnovolin A. In the other branch, the methylation precedes the Baeyer-Villiger oxidation and the enoyl reduction to yield asnovolin A via the asnovolin J intermediate. Asnovolin A is further converted to fumigatonoid A by the Fe(II)/2-oxoglutarate-dependent dioxygenase nvfI that catalyzes an endoperoxidation reaction. The alpha/beta hydrolase nvfD then acts as an epimerase that converts fumigatonoid A to its C-5' epimer, which then undergoes spontaneous or nvfD-catalyzed lactonization. The following step utilizes the ketoreductase nvfG to produce fumigatonoid B. The dioxygenase nvfE further converts fumigatonoid B into fumigatonoid C. Finally the Fe(II)/2-oxoglutarate-dependent dioxygenase nvfF catalyzes two rounds of oxidation to transform fumigatonoid C into the end product, novofumigatonin A. In Aspergillus novofumigatus (strain IBT 16806), this protein is Fumigatonoid B endoperoxide isomerase nvfE.